Consider the following 171-residue polypeptide: Glutamyl-tRNA(Gln) amidotransferase subunit F, mitochondrial (171 aa).

The protein belongs to the GatF family. Subunit of the heterotrimeric GatFAB amidotransferase (AdT) complex, composed of A, B and F subunits.

Its subcellular location is the mitochondrion inner membrane. It catalyses the reaction L-glutamyl-tRNA(Gln) + L-glutamine + ATP + H2O = L-glutaminyl-tRNA(Gln) + L-glutamate + ADP + phosphate + H(+). Functionally, allows the formation of correctly charged Gln-tRNA(Gln) through the transamidation of misacylated Glu-tRNA(Gln) in the mitochondria. The reaction takes place in the presence of glutamine and ATP through an activated gamma-phospho-Glu-tRNA(Gln). Required for proper protein synthesis within the mitochondrion. The polypeptide is Glutamyl-tRNA(Gln) amidotransferase subunit F, mitochondrial (Zygosaccharomyces rouxii (strain ATCC 2623 / CBS 732 / NBRC 1130 / NCYC 568 / NRRL Y-229)).